Consider the following 90-residue polypeptide: Heat shock protein beta-7 (90 aa).

Positions 39-90 (PLTFPARPGGQGNIKTLGDAYEFTVDMRDFSPEDIIVTTSNNHIEVRAEKKP) constitute a sHSP domain.

This sequence belongs to the small heat shock protein (HSP20) family. As to quaternary structure, interacts with C-terminal domain of actin-binding protein 280. In terms of tissue distribution, found in both cardiac and skeletal muscle.

It is found in the cytoplasm. Its subcellular location is the nucleus. The protein localises to the cajal body. This is Heat shock protein beta-7 (Hspb7) from Rattus norvegicus (Rat).